A 275-amino-acid polypeptide reads, in one-letter code: Monooxygenase af470 (275 aa).

The catalysed reaction is prefumagillin + NADPH + 2 O2 = fumagillin + acetaldehyde + NADP(+) + H2O. The protein operates within secondary metabolite biosynthesis; terpenoid biosynthesis. In terms of biological role, monooxygenase; part of the gene cluster that mediates the biosynthesis of fumagillin, a meroterpenoid that has numerous biological activities including irreversible inhibition of human type 2 methionine aminopeptidase (METAP2). Within the pathway, the monooxygenase af470 catalyzes the oxidative cleavage of prefumagillin to yield the final compound of the pathway, fumagillin. The pathway begins with the conversion of farnesyl pyrophosphate (FPP) to beta-trans-bergamotene by the membrane-bound beta-trans-bergamotene synthase af520. The multifunctional cytochrome P450 monooxygenase af510 then converts beta-trans-bergamotene into 5-keto-demethoxyfumagillol via several oxydation steps. 5-keto-demethoxyfumagillol is then subjected to successive C-6 hydroxylation and O-methylation by the dioxygenase af480 and O-methyltransferase af390-400, respectively, to yield 5-keto-fumagillol, which is then stereoselectively reduced by the keto-reductase af490 to 5R-hydroxy-seco-sesquiterpene. The next step is the polyketide transferase af380-catalyzed transfer of a dodecapentaenoyl group synthesized by the polyketide synthase af370 onto 5R-hydroxy-seco-sesquiterpene which leads to the production of prefumagillin. Finally, oxidative cleavage by the monooxygenase af470 converts prefumagillin to fumagillin. The protein is Monooxygenase af470 of Aspergillus fumigatus (strain ATCC MYA-4609 / CBS 101355 / FGSC A1100 / Af293) (Neosartorya fumigata).